Reading from the N-terminus, the 224-residue chain is Biosynthetic peptidoglycan transglycosylase (224 aa).

Residues 12 to 32 form a helical membrane-spanning segment; the sequence is ILVVLAILPVFLLLVYSLPFV.

Belongs to the glycosyltransferase 51 family.

It localises to the cell inner membrane. The enzyme catalyses [GlcNAc-(1-&gt;4)-Mur2Ac(oyl-L-Ala-gamma-D-Glu-L-Lys-D-Ala-D-Ala)](n)-di-trans,octa-cis-undecaprenyl diphosphate + beta-D-GlcNAc-(1-&gt;4)-Mur2Ac(oyl-L-Ala-gamma-D-Glu-L-Lys-D-Ala-D-Ala)-di-trans,octa-cis-undecaprenyl diphosphate = [GlcNAc-(1-&gt;4)-Mur2Ac(oyl-L-Ala-gamma-D-Glu-L-Lys-D-Ala-D-Ala)](n+1)-di-trans,octa-cis-undecaprenyl diphosphate + di-trans,octa-cis-undecaprenyl diphosphate + H(+). It participates in cell wall biogenesis; peptidoglycan biosynthesis. Functionally, peptidoglycan polymerase that catalyzes glycan chain elongation from lipid-linked precursors. This is Biosynthetic peptidoglycan transglycosylase from Brucella suis biovar 1 (strain 1330).